The primary structure comprises 487 residues: WD repeat, SAM and U-box domain-containing protein 1 (487 aa).

7 WD repeats span residues 10–47 (SHRD…ELPF), 52–93 (GHGY…AVLE), 95–134 (PGRS…LRRT), 137–176 (VNDT…LHAE), 179–227 (AHDL…SAGI), 237–276 (GQSA…LLYT), and 279–318 (QHDR…SAQG). An SAM domain is found at 347 to 411 (WSEEEVLAWL…MKKIEELKMV (65 aa)). Residues 416 to 487 (GTPDEFLCPI…MAIFRWSTSQ (72 aa)) form the U-box domain.

This is WD repeat, SAM and U-box domain-containing protein 1 (wdsub1) from Danio rerio (Zebrafish).